Here is a 382-residue protein sequence, read N- to C-terminus: Mannitol-1-phosphate 5-dehydrogenase (382 aa).

Residue 3–14 participates in NAD(+) binding; it reads ALHFGAGNIGRG.

Belongs to the mannitol dehydrogenase family.

The catalysed reaction is D-mannitol 1-phosphate + NAD(+) = beta-D-fructose 6-phosphate + NADH + H(+). In Salmonella schwarzengrund (strain CVM19633), this protein is Mannitol-1-phosphate 5-dehydrogenase.